A 255-amino-acid polypeptide reads, in one-letter code: MVASGAATKGVTVMKQTPPAAVGRRHLLEISASAAGVIALSACSGSPPEPGKGRPDTTPEQEVPVTAPEDLMREHGVLKRILLIYREGIRRLQADDQSPAPALNESAQIIRRFIEDYHGQLEEQYVFPKLEQAGKLTDITSVLRTQHQRGRVLTDRVLAATTAAAAFDQPARDTLAQDMAAYIRMFEPHEAREDTVVFPALRDVMSAVEFRDMAETFEDEEHRRFGEAGFQSVVDKVADIEKSLGIYDLSQFTPS.

A disordered region spans residues 42 to 67 (ACSGSPPEPGKGRPDTTPEQEVPVTA).

This is an uncharacterized protein from Mycobacterium tuberculosis (strain CDC 1551 / Oshkosh).